Reading from the N-terminus, the 124-residue chain is Small ribosomal subunit protein uS13 (124 aa).

The segment at glycine 95–arginine 124 is disordered.

Belongs to the universal ribosomal protein uS13 family. Part of the 30S ribosomal subunit. Forms a loose heterodimer with protein S19. Forms two bridges to the 50S subunit in the 70S ribosome.

In terms of biological role, located at the top of the head of the 30S subunit, it contacts several helices of the 16S rRNA. In the 70S ribosome it contacts the 23S rRNA (bridge B1a) and protein L5 of the 50S subunit (bridge B1b), connecting the 2 subunits; these bridges are implicated in subunit movement. Contacts the tRNAs in the A and P-sites. The protein is Small ribosomal subunit protein uS13 of Mycobacterium avium (strain 104).